The following is a 279-amino-acid chain: Aquaporin A (279 aa).

Residues 1 to 40 are Cytoplasmic-facing; sequence MVKVVPLRFITYDPLKDPSKMIYRRPISKPVKAFKGFFSE. Residues 41 to 61 form a helical membrane-spanning segment; the sequence is FLGTLYLVYFCGGSVCAAFAV. The Extracellular segment spans residues 62–69; that stretch reads AGDSAARA. A helical membrane pass occupies residues 70-90; it reads LLGGLIQGMALAALIWAVSGV. Over 91-114 the chain is Cytoplasmic; it reads SGCNLNPAVTLANLLSGRVGLIDS. The NPA 1 signature appears at 96–98; the sequence is NPA. The helical transmembrane segment at 115-135 threads the bilayer; it reads LYYVAAQILGCIAGAGILYGC. Residues 136 to 158 lie on the Extracellular side of the membrane; sequence LPNMYRIDLGVPHLAPGMNTGQA. Residues 159 to 179 traverse the membrane as a helical segment; that stretch reads FLMEMMLTSILCLCVLGTSVF. The Cytoplasmic portion of the chain corresponds to 180–188; the sequence is NVWDRRLNR. A helical transmembrane segment spans residues 189–209; sequence IAPFAIGLALFIGVAIGFNFS. The Extracellular portion of the chain corresponds to 210-227; it reads GGALNPVRVLGPSIISGV. The short motif at 214-216 is the NPA 2 element; sequence NPV. A helical membrane pass occupies residues 228-248; that stretch reads WSHHWVYWLGPIVGAILAAFI. Over 249-279 the chain is Cytoplasmic; that stretch reads YRCLLQERFDVIERPGYIAPLIDPSTAVSSY.

It belongs to the MIP/aquaporin (TC 1.A.8) family.

It is found in the cell membrane. Its function is as follows. May form a water-specific channel. Required for prolonged spore survival on fruiting bodies. The polypeptide is Aquaporin A (aqpA) (Dictyostelium discoideum (Social amoeba)).